The primary structure comprises 214 residues: Phosphatidylserine decarboxylase proenzyme (214 aa).

The Schiff-base intermediate with substrate; via pyruvic acid role is filled by serine 182. Residue serine 182 is modified to Pyruvic acid (Ser); by autocatalysis.

The protein belongs to the phosphatidylserine decarboxylase family. PSD-A subfamily. Heterodimer of a large membrane-associated beta subunit and a small pyruvoyl-containing alpha subunit. It depends on pyruvate as a cofactor. Is synthesized initially as an inactive proenzyme. Formation of the active enzyme involves a self-maturation process in which the active site pyruvoyl group is generated from an internal serine residue via an autocatalytic post-translational modification. Two non-identical subunits are generated from the proenzyme in this reaction, and the pyruvate is formed at the N-terminus of the alpha chain, which is derived from the carboxyl end of the proenzyme. The post-translation cleavage follows an unusual pathway, termed non-hydrolytic serinolysis, in which the side chain hydroxyl group of the serine supplies its oxygen atom to form the C-terminus of the beta chain, while the remainder of the serine residue undergoes an oxidative deamination to produce ammonia and the pyruvoyl prosthetic group on the alpha chain.

Its subcellular location is the cell membrane. The enzyme catalyses a 1,2-diacyl-sn-glycero-3-phospho-L-serine + H(+) = a 1,2-diacyl-sn-glycero-3-phosphoethanolamine + CO2. The protein operates within phospholipid metabolism; phosphatidylethanolamine biosynthesis; phosphatidylethanolamine from CDP-diacylglycerol: step 2/2. Functionally, catalyzes the formation of phosphatidylethanolamine (PtdEtn) from phosphatidylserine (PtdSer). The protein is Phosphatidylserine decarboxylase proenzyme of Burkholderia lata (strain ATCC 17760 / DSM 23089 / LMG 22485 / NCIMB 9086 / R18194 / 383).